Here is a 279-residue protein sequence, read N- to C-terminus: uncharacterized protein (279 aa).

Helical transmembrane passes span 31–51 (GYIA…FHAT), 67–87 (LLSI…AKII), and 115–135 (EITG…SLAL).

The protein belongs to the transketolase family. Requires thiamine diphosphate as cofactor.

The protein localises to the cell membrane. This is an uncharacterized protein from Sinorhizobium fredii (strain NBRC 101917 / NGR234).